The primary structure comprises 518 residues: Sensor protein kinase HptS (518 aa).

2 helical membrane passes run 20-40 and 222-242; these read IFPV…IYIW and GITL…FGFI. Positions 297 to 513 constitute a Histidine kinase domain; it reads EQLIHSIEHT…LICYKIPLSR (217 aa). At His325 the chain carries Phosphohistidine; by autocatalysis.

Autophosphorylated.

It localises to the cell membrane. It catalyses the reaction ATP + protein L-histidine = ADP + protein N-phospho-L-histidine.. Its function is as follows. Member of the two-component regulatory system HptS/HptR that regulates genes involved in hexose phosphate transport system in response to changes in extracellular phosphate sources. May act as a sensor protein kinase which is autophosphorylated at a histidine residue and transfers its phosphate group to the conserved aspartic acid residue in the regulatory domain of HptS. In turn, HptS antagonizes CcpA-dependent transcription of a subset of CcpA-regulated genes involved in antibiotic susceptibility. This Staphylococcus aureus (strain bovine RF122 / ET3-1) protein is Sensor protein kinase HptS (hptS).